The chain runs to 172 residues: NADH-ubiquinone oxidoreductase chain 6 (172 aa).

A run of 5 helical transmembrane segments spans residues 1–21 (MTYF…AVAS), 27–47 (YGVV…LSLG), 48–68 (ISFV…VVFV), 87–107 (VVGY…VGGF), and 138–158 (CGVG…FVVL).

This sequence belongs to the complex I subunit 6 family.

It is found in the mitochondrion membrane. The enzyme catalyses a ubiquinone + NADH + 5 H(+)(in) = a ubiquinol + NAD(+) + 4 H(+)(out). In terms of biological role, core subunit of the mitochondrial membrane respiratory chain NADH dehydrogenase (Complex I) that is believed to belong to the minimal assembly required for catalysis. Complex I functions in the transfer of electrons from NADH to the respiratory chain. The immediate electron acceptor for the enzyme is believed to be ubiquinone. In Uria aalge (Common mure), this protein is NADH-ubiquinone oxidoreductase chain 6 (MT-ND6).